Reading from the N-terminus, the 235-residue chain is Ribonuclease PH (235 aa).

Phosphate is bound by residues R86 and 124–126; that span reads GTR.

The protein belongs to the RNase PH family. In terms of assembly, homohexameric ring arranged as a trimer of dimers.

It carries out the reaction tRNA(n+1) + phosphate = tRNA(n) + a ribonucleoside 5'-diphosphate. Phosphorolytic 3'-5' exoribonuclease that plays an important role in tRNA 3'-end maturation. Removes nucleotide residues following the 3'-CCA terminus of tRNAs; can also add nucleotides to the ends of RNA molecules by using nucleoside diphosphates as substrates, but this may not be physiologically important. Probably plays a role in initiation of 16S rRNA degradation (leading to ribosome degradation) during starvation. This chain is Ribonuclease PH, found in Francisella tularensis subsp. holarctica (strain FTNF002-00 / FTA).